Consider the following 587-residue polypeptide: MKRSMYAGRVREEHIGQEITLKGWVGRRRDLGGLIFIDLRDREGIMQLVINPEKVSAEVMATAESLRSEFVIEVTGQVAAREQANDKLPTGAVELNVTALIVLNTAKTTPFEIKDGIEANDDTRLRYRYLDLRRPEMLENLKLRAKVTHSIRNYLDELEFIDVETPFLSKSTPEGARDYLVPSRVNKGHFYALPQSPQITKQLLMNAGFDRYYQIVKCFRDEDLRGDRQPEFTQVDLETSFLTEQEIQDITEGLIARVMKETKGIEVTLPFPRMKYDDAMALYGSDKPDTRFDMLLQDLTEVVKGVDFKVFSEAPAVKAIVVKGAADNYSRKDIDKMTEVAKQYGAKGLAWVKVVDGELNGPVAKFLTSIQAELTTALSLEDKDLVLFVADTLEVANATLGALRGRIAKELGLIDNDKFNFLWVVDWPMFEWSEEEGRYMSAHHPFTLPQEETAHELEGDLAKVRAIAYDIVLNGYELGGGSLRINQKDLQERMFKALGFSAEEANDQFGFLLEAMDYGFPPHGGLAIGLDRFVMLLAGEENIREVIAFPKNNKASDPMTQAPSTVALKQLEELSLQVEEDETSKTN.

Glu-174 contacts L-aspartate. Positions Gln-198–Lys-201 are aspartate. Position 220 (Arg-220) interacts with L-aspartate. Residues Arg-220–Glu-222 and Gln-229 each bind ATP. His-443 contributes to the L-aspartate binding site. Glu-477 serves as a coordination point for ATP. Position 484 (Arg-484) interacts with L-aspartate. Gly-529–Arg-532 provides a ligand contact to ATP.

The protein belongs to the class-II aminoacyl-tRNA synthetase family. Type 1 subfamily. As to quaternary structure, homodimer.

It is found in the cytoplasm. It catalyses the reaction tRNA(Asp) + L-aspartate + ATP = L-aspartyl-tRNA(Asp) + AMP + diphosphate. Functionally, catalyzes the attachment of L-aspartate to tRNA(Asp) in a two-step reaction: L-aspartate is first activated by ATP to form Asp-AMP and then transferred to the acceptor end of tRNA(Asp). The sequence is that of Aspartate--tRNA ligase from Streptococcus pneumoniae (strain Hungary19A-6).